Reading from the N-terminus, the 178-residue chain is Photosystem I assembly protein Ycf4 (178 aa).

Transmembrane regions (helical) follow at residues 19–39 (FLVA…SLSS) and 61–81 (LVMG…WYVI).

It belongs to the Ycf4 family.

It localises to the cellular thylakoid membrane. In terms of biological role, seems to be required for the assembly of the photosystem I complex. The sequence is that of Photosystem I assembly protein Ycf4 from Synechococcus sp. (strain CC9902).